The sequence spans 433 residues: Probable RNA 3'-terminal phosphate cyclase (433 aa).

A compositionally biased stretch (low complexity) spans 1 to 10; the sequence is MGKNKNYNKN. The segment at 1 to 28 is disordered; the sequence is MGKNKNYNKNQFKKSKTNNDTTVAQQQQ. Residues 18-28 are compositionally biased toward polar residues; the sequence is NNDTTVAQQQQ. ATP is bound by residues Gln-137 and 328 to 332; that span reads YLQDQ. Residue His-354 is the Tele-AMP-histidine intermediate of the active site. The disordered stretch occupies residues 400–433; that stretch reads LNNNNNNSNSNTTTTTTTTTISTTTIDNQNSEEK. Residues 401 to 425 show a composition bias toward low complexity; it reads NNNNNNSNSNTTTTTTTTTISTTTI.

Belongs to the RNA 3'-terminal cyclase family. Type 1 subfamily.

The protein localises to the nucleus. The protein resides in the nucleoplasm. It catalyses the reaction a 3'-end 3'-phospho-ribonucleotide-RNA + ATP = a 3'-end 2',3'-cyclophospho-ribonucleotide-RNA + AMP + diphosphate. Catalyzes the conversion of 3'-phosphate to a 2',3'-cyclic phosphodiester at the end of RNA. The mechanism of action of the enzyme occurs in 3 steps: (A) adenylation of the enzyme by ATP; (B) transfer of adenylate to an RNA-N3'P to produce RNA-N3'PP5'A; (C) and attack of the adjacent 2'-hydroxyl on the 3'-phosphorus in the diester linkage to produce the cyclic end product. The biological role of this enzyme is unknown but it is likely to function in some aspects of cellular RNA processing. The protein is Probable RNA 3'-terminal phosphate cyclase (rtca) of Dictyostelium discoideum (Social amoeba).